Reading from the N-terminus, the 397-residue chain is Glia-derived nexin (397 aa).

The first 19 residues, 1-19 (MNWHFPFFILTTVTLSSVY), serve as a signal peptide directing secretion. The N-linked (GlcNAc...) asparagine glycan is linked to asparagine 159.

The protein belongs to the serpin family.

It localises to the secreted. The protein localises to the extracellular space. Functionally, serine protease inhibitor with activity toward thrombin, trypsin, and urokinase. Promotes neurite extension by inhibiting thrombin. Binds heparin. The chain is Glia-derived nexin (Serpine2) from Rattus norvegicus (Rat).